Here is a 266-residue protein sequence, read N- to C-terminus: Urease accessory protein UreD (266 aa).

It belongs to the UreD family. UreD, UreF and UreG form a complex that acts as a GTP-hydrolysis-dependent molecular chaperone, activating the urease apoprotein by helping to assemble the nickel containing metallocenter of UreC. The UreE protein probably delivers the nickel.

The protein resides in the cytoplasm. Its function is as follows. Required for maturation of urease via the functional incorporation of the urease nickel metallocenter. This Jannaschia sp. (strain CCS1) protein is Urease accessory protein UreD.